We begin with the raw amino-acid sequence, 197 residues long: Rac-like GTP-binding protein RHO1 (197 aa).

GTP is bound at residue 13–20 (GDGAVGKT). An Effector region motif is present at residues 35 to 43 (YVPTVFDNF). GTP is bound by residues 60-64 (DTAGQ) and 118-121 (TKLD). Residue Cys-194 is modified to Cysteine methyl ester. The S-geranylgeranyl cysteine moiety is linked to residue Cys-194. Positions 195–197 (SIL) are cleaved as a propeptide — removed in mature form.

This sequence belongs to the small GTPase superfamily. Rho family.

The protein resides in the cytoplasm. It localises to the membrane. Functionally, inactive GDP-bound Rho GTPases reside in the cytosol, are found in a complex with Rho GDP-dissociation inhibitors (Rho GDIs), and are released from the GDI protein in order to translocate to membranes upon activation. In Beta vulgaris (Sugar beet), this protein is Rac-like GTP-binding protein RHO1 (RHO1).